The primary structure comprises 569 residues: Urease subunit alpha (569 aa).

In terms of domain architecture, Urease spans 132-569; that stretch reads GGIDSHIHFI…LPLAQRYFLF (438 aa). Ni(2+) contacts are provided by His137, His139, and Lys220. An N6-carboxylysine modification is found at Lys220. A substrate-binding site is contributed by His222. Residues His249 and His275 each contribute to the Ni(2+) site. His323 (proton donor) is an active-site residue. Residue Asp363 participates in Ni(2+) binding.

The protein belongs to the metallo-dependent hydrolases superfamily. Urease alpha subunit family. In terms of assembly, heterotrimer of UreA (gamma), UreB (beta) and UreC (alpha) subunits. Three heterotrimers associate to form the active enzyme. Ni cation serves as cofactor. In terms of processing, carboxylation allows a single lysine to coordinate two nickel ions.

Its subcellular location is the cytoplasm. The enzyme catalyses urea + 2 H2O + H(+) = hydrogencarbonate + 2 NH4(+). Its pathway is nitrogen metabolism; urea degradation; CO(2) and NH(3) from urea (urease route): step 1/1. This Dechloromonas aromatica (strain RCB) protein is Urease subunit alpha.